Consider the following 523-residue polypeptide: 2-isopropylmalate synthase (523 aa).

Residues 5–267 (VIIFDTTLRD…HTNINHHEIW (263 aa)) form the Pyruvate carboxyltransferase domain. Aspartate 14, histidine 202, histidine 204, and asparagine 238 together coordinate Mn(2+). Residues 392–523 (RLDYFSVQSG…QNKENNKETV (132 aa)) are regulatory domain.

Belongs to the alpha-IPM synthase/homocitrate synthase family. LeuA type 1 subfamily. In terms of assembly, homodimer. Mn(2+) serves as cofactor.

It is found in the cytoplasm. The catalysed reaction is 3-methyl-2-oxobutanoate + acetyl-CoA + H2O = (2S)-2-isopropylmalate + CoA + H(+). It participates in amino-acid biosynthesis; L-leucine biosynthesis; L-leucine from 3-methyl-2-oxobutanoate: step 1/4. Its function is as follows. Catalyzes the condensation of the acetyl group of acetyl-CoA with 3-methyl-2-oxobutanoate (2-ketoisovalerate) to form 3-carboxy-3-hydroxy-4-methylpentanoate (2-isopropylmalate). In Salmonella agona (strain SL483), this protein is 2-isopropylmalate synthase.